A 317-amino-acid polypeptide reads, in one-letter code: E3 ubiquitin-protein ligase NRDP1 (317 aa).

An RING-type; degenerate zinc finger spans residues 18 to 57 (CPICSGVLEEPVQAPHCEHAFCNACITQWFSQQQTCPVDR). The segment at 78–138 (KLQIACDNAV…LPNHNCIKHL (61 aa)) adopts an SIAH-type; degenerate zinc-finger fold.

As to quaternary structure, interacts with USP8, ERBB3, PRKN and BIRC6. Interacts with CSF2RB, EPOR, IL3RA, MYD88 and TBK1. Interacts with CLEC16A. Post-translationally, autoubiquitinated. Autoubiquitination leads to proteasomal degradation. Deubiquitinated by USP8 to get stabilized which induces apoptosis. As to expression, detected in ovary, testis and prostate.

It carries out the reaction S-ubiquitinyl-[E2 ubiquitin-conjugating enzyme]-L-cysteine + [acceptor protein]-L-lysine = [E2 ubiquitin-conjugating enzyme]-L-cysteine + N(6)-ubiquitinyl-[acceptor protein]-L-lysine.. The protein operates within protein modification; protein ubiquitination. Its function is as follows. Acts as E3 ubiquitin-protein ligase and regulates the degradation of target proteins. Polyubiquitinates MYD88. Negatively regulates MYD88-dependent production of pro-inflammatory cytokines. Can promote TRIF-dependent production of type I interferon and inhibits infection with vesicular stomatitis virus. Promotes also activation of TBK1 and IRF3. Involved in the ubiquitination of erythropoietin (EPO) and interleukin-3 (IL-3) receptors. Thus, through maintaining basal levels of cytokine receptors, RNF41 is involved in the control of hematopoietic progenitor cell differentiation into myeloerythroid lineages. Contributes to the maintenance of steady-state ERBB3 levels by mediating its growth factor-independent degradation. Involved in the degradation of the inhibitor of apoptosis BIRC6 and thus is an important regulator of cell death by promoting apoptosis. Also acts as a PRKN modifier that accelerates its degradation, resulting in a reduction of PRKN activity, influencing the balance of intracellular redox state. The RNF41-PRKN pathway regulates autophagosome-lysosome fusion during late mitophagy. Mitophagy is a selective form of autophagy necessary for mitochondrial quality control. This chain is E3 ubiquitin-protein ligase NRDP1 (RNF41), found in Homo sapiens (Human).